The primary structure comprises 705 residues: Crooked neck-like protein 1 (705 aa).

14 HAT repeats span residues 55–87 (DYRLRKRQQYESLLGRNRKTAAIYIKYAAWEES), 89–121 (KDLTRARSVFERFLDIDHRIPTVWIKYAEMEMK), 123–155 (KNINLARNIWDRAVCLLPRVSQLWFKYTFMEDM), 157–188 (GNYPAARAIFERWMQWKPEPQAWNSYLKFEQR), 190–221 (KLFENTRLIFEKYILVHPYIKTWIKYTKFEER), 223–258 (GNIENARTIFQRAIEFLGEDGNDEQLFIAFAKFEEK), 260–294 (KEIERARVIYKYAIDHVPKSRAKDLFDTFTNFEKQ), 304–336 (VVLGKKRFQYEEEIKKNSKNYDIWFDYLKMEEI), 338–372 (GEIEKTREIYERSIGNLPPTNEKKHWKRYIYLWIN), 382–418 (KDMERARSVYSECIKLIPHKEFSFSKIWILYANFEIR), 420–451 (LNLDKARLIYGQAIGRNPKSKIFDQYIHLEIE), 453–485 (GNFDRVRTLYEKYLEIMPDNCDAWCKFAQLETE), 487–521 (GETVRARAIFELAIQQPNLDRPEVVWKDFIDSEIQ), and 523–554 (KQFDFVKQLYRKLLEKTNHVKVWIGFIKFVHS). Positions 559–591 (QQQKQRQQQQEEDGDSNTTKKDGGDDDNNDDIN) are disordered. Residues 597–629 (IFIEAHKSLSNSDKEERLLLLESWKEFEQTFGN) form an HAT 15 repeat.

The protein belongs to the crooked-neck family. Identified in the spliceosome C complex.

It localises to the nucleus. The protein resides in the nucleus speckle. Its function is as follows. Involved in pre-mRNA splicing process. This Dictyostelium discoideum (Social amoeba) protein is Crooked neck-like protein 1 (crnkl1).